Here is a 644-residue protein sequence, read N- to C-terminus: MEQVTLTSDGTSSVFAENTVREVCNINYWGMRYYNVDEKGDIFVCPDPDKPQNRVSLAALAEKVQREQGAHLPTLFCFPQIIQHRLRSINQAFKRAREDFGYEGNYFLVYPIKVNQHRRIVESLISSGQPLGLEAGSKAELMAVLAHAGITQTVIVCNGYKDREYVRFALMGEKLGHKVYLVIEKLSEIQLVLEEAAKLNVKPRLGVRARLASQGSGKWQSSGGEKSKFGLSASQVLSLVQMLKEHECLDCLQLLHFHLGSQLGNIRDVATGVRESARFYVELHKLGVNIQCFDVGGGLGVDYEGNRTQSDCSVNYGLNEYADTVVWGIGQACREHGLPHPTIITESGRGVTAHHAVLVSNVIGVERYKFETLAAPAKDAPSVLHSMWETWVDIQSSREKRSLRSWIHESQFDLSDVHNQYNVGLLNLEQRAWAEQLYLNICHEVGQLFNEKHRSHRTIIDELQERFADKLYVNFSLFQSLPDAWGIDQLFPVCPISNLNQPVSRRAVLLDITCDSDGTIDHYIDGDGITTTMPMPHYEEDNPPLLGFFMVGAYQEILGNMHNLFGDTSTVDVLVHEQDKAYIVDYDEGNTVADMLEYVYLDPKKLLDRYREQIEHSNLPASEAIQFLNELEVGLNGYTYLEDE.

Residue lysine 113 is modified to N6-(pyridoxal phosphate)lysine. 293–303 is a substrate binding site; that stretch reads FDVGGGLGVDY.

Belongs to the Orn/Lys/Arg decarboxylase class-II family. SpeA subfamily. The cofactor is Mg(2+). It depends on pyridoxal 5'-phosphate as a cofactor.

It catalyses the reaction L-arginine + H(+) = agmatine + CO2. Catalyzes the biosynthesis of agmatine from arginine. This Pasteurella multocida (strain Pm70) protein is Biosynthetic arginine decarboxylase.